A 1025-amino-acid chain; its full sequence is Exportin-T (1025 aa).

The protein belongs to the exportin family.

Its subcellular location is the nucleus. The protein resides in the cytoplasm. In terms of biological role, tRNA nucleus export receptor which facilitates tRNA translocation across the nuclear pore complex. Involved in pre-tRNA splicing, probably by affecting the interaction of pre-tRNA with splicing endonuclease. The chain is Exportin-T (LOS1) from Candida albicans (strain SC5314 / ATCC MYA-2876) (Yeast).